Here is a 217-residue protein sequence, read N- to C-terminus: Choline transport system permease protein OpuBB (217 aa).

The region spanning 19-198 (TYEHITISLI…ILAIVIDYVL (180 aa)) is the ABC transmembrane type-1 domain. 6 helical membrane passes run 23–43 (ITIS…LGVV), 52–74 (GTII…AFFI), 84–101 (AIVA…RNTY), 128–148 (LVEL…STIY), 150–170 (IGWA…YIFI), and 180–200 (IIGG…VLAV).

This sequence belongs to the binding-protein-dependent transport system permease family. CysTW subfamily.

Its subcellular location is the cell membrane. Functionally, involved in a high affinity multicomponent binding-protein-dependent transport system for choline; probably responsible for the translocation of the substrate across the membrane. The protein is Choline transport system permease protein OpuBB (opuBB) of Bacillus subtilis (strain 168).